The sequence spans 540 residues: Acyl-CoA synthetase 7 (540 aa).

ATP-binding positions include 186 to 194 (SSGTTGKPK), D415, R430, and K522. A Microbody targeting signal motif is present at residues 538 to 540 (AKL).

It belongs to the ATP-dependent AMP-binding enzyme family. As to expression, expressed in intestine.

The protein localises to the peroxisome. It carries out the reaction nonanoate + ATP + CoA = nonanoyl-CoA + AMP + diphosphate. It catalyses the reaction IC-asc-C7 + ATP + CoA = IC-asc-C7-CoA + AMP + diphosphate. The catalysed reaction is IC-asc-C9 + ATP + CoA = IC-asc-C9-CoA + AMP + diphosphate. In terms of biological role, plays a role in ascaroside pheromones biosynthesis, which regulates development and behavior. Specifically, activates the side chain of medium-chain indol-3-carbonyl (IC)-ascarosides for shortening through beta-oxidation. Converts IC-asc-C7 and IC-asc-C9 into IC-asc-C7-CoA and IC-asc-C9-CoA, respectively. May play a role in fatty-acid metabolism by activating and converting nonanoate (C9) into nonanoyl-CoA (C9-CoA). In Caenorhabditis elegans, this protein is Acyl-CoA synthetase 7.